A 200-amino-acid polypeptide reads, in one-letter code: Cytochrome c biogenesis ATP-binding export protein CcmA (200 aa).

The ABC transporter domain maps to 1-200 (MRLSGRGLRC…TREMRIGAAA (200 aa)). An ATP-binding site is contributed by 35-42 (GRNGAGKT).

Belongs to the ABC transporter superfamily. CcmA exporter (TC 3.A.1.107) family. The complex is composed of two ATP-binding proteins (CcmA) and two transmembrane proteins (CcmB).

It is found in the cell inner membrane. The enzyme catalyses heme b(in) + ATP + H2O = heme b(out) + ADP + phosphate + H(+). In terms of biological role, part of the ABC transporter complex CcmAB involved in the biogenesis of c-type cytochromes; once thought to export heme, this seems not to be the case, but its exact role is uncertain. Responsible for energy coupling to the transport system. The sequence is that of Cytochrome c biogenesis ATP-binding export protein CcmA from Rhodopseudomonas palustris (strain HaA2).